Consider the following 239-residue polypeptide: Lipoprotein-releasing system ATP-binding protein LolD (239 aa).

The 226-residue stretch at 14-239 (IRAERLGKTY…KLRELAPSAV (226 aa)) folds into the ABC transporter domain. 50-57 (GASGAGKS) serves as a coordination point for ATP.

It belongs to the ABC transporter superfamily. Lipoprotein translocase (TC 3.A.1.125) family. In terms of assembly, the complex is composed of two ATP-binding proteins (LolD) and two transmembrane proteins (LolC and LolE).

It is found in the cell inner membrane. Its function is as follows. Part of the ABC transporter complex LolCDE involved in the translocation of mature outer membrane-directed lipoproteins, from the inner membrane to the periplasmic chaperone, LolA. Responsible for the formation of the LolA-lipoprotein complex in an ATP-dependent manner. In Xanthomonas campestris pv. campestris (strain 8004), this protein is Lipoprotein-releasing system ATP-binding protein LolD.